Here is a 465-residue protein sequence, read N- to C-terminus: Tyrosine 3-monooxygenase (465 aa).

Residues histidine 294, histidine 299, and glutamate 339 each coordinate Fe cation.

This sequence belongs to the biopterin-dependent aromatic amino acid hydroxylase family. Fe(2+) is required as a cofactor.

It localises to the cytoplasm. It is found in the perinuclear region. It catalyses the reaction (6R)-L-erythro-5,6,7,8-tetrahydrobiopterin + L-tyrosine + O2 = (4aS,6R)-4a-hydroxy-L-erythro-5,6,7,8-tetrahydrobiopterin + L-dopa. It functions in the pathway catecholamine biosynthesis; dopamine biosynthesis; dopamine from L-tyrosine: step 1/2. The chain is Tyrosine 3-monooxygenase (TH) from Schistosoma mansoni (Blood fluke).